A 131-amino-acid polypeptide reads, in one-letter code: Maturin (131 aa).

Positions Phe107 to Glu120 are enriched in acidic residues. Residues Phe107 to Gln131 form a disordered region.

Belongs to the MTURN family.

It is found in the cytoplasm. In terms of biological role, involved in early neuronal development; required for cell cycle exit and differentiation of primary neurons. Cooperates synergistically with pak3 to promote primary neural differentiation within the neural plate. May play a role in promoting megakaryocyte differentiation. In Xenopus laevis (African clawed frog), this protein is Maturin (mturn).